A 677-amino-acid polypeptide reads, in one-letter code: Methionine--tRNA ligase (677 aa).

Residues 15–25 (PYANGSIHLGH) carry the 'HIGH' region motif. Residues cysteine 146, cysteine 149, cysteine 159, and cysteine 162 each coordinate Zn(2+). Residues 333–337 (KMSKS) carry the 'KMSKS' region motif. Lysine 336 is a binding site for ATP. The region spanning 575–677 (DFAKVDLRVA…AGAKPGHQVK (103 aa)) is the tRNA-binding domain.

Belongs to the class-I aminoacyl-tRNA synthetase family. MetG type 1 subfamily. Homodimer. It depends on Zn(2+) as a cofactor.

Its subcellular location is the cytoplasm. It catalyses the reaction tRNA(Met) + L-methionine + ATP = L-methionyl-tRNA(Met) + AMP + diphosphate. In terms of biological role, is required not only for elongation of protein synthesis but also for the initiation of all mRNA translation through initiator tRNA(fMet) aminoacylation. This chain is Methionine--tRNA ligase, found in Shigella flexneri serotype 5b (strain 8401).